Consider the following 177-residue polypeptide: ATP synthase subunit delta (177 aa).

This sequence belongs to the ATPase delta chain family. F-type ATPases have 2 components, F(1) - the catalytic core - and F(0) - the membrane proton channel. F(1) has five subunits: alpha(3), beta(3), gamma(1), delta(1), epsilon(1). F(0) has three main subunits: a(1), b(2) and c(10-14). The alpha and beta chains form an alternating ring which encloses part of the gamma chain. F(1) is attached to F(0) by a central stalk formed by the gamma and epsilon chains, while a peripheral stalk is formed by the delta and b chains.

Its subcellular location is the cell inner membrane. Functionally, f(1)F(0) ATP synthase produces ATP from ADP in the presence of a proton or sodium gradient. F-type ATPases consist of two structural domains, F(1) containing the extramembraneous catalytic core and F(0) containing the membrane proton channel, linked together by a central stalk and a peripheral stalk. During catalysis, ATP synthesis in the catalytic domain of F(1) is coupled via a rotary mechanism of the central stalk subunits to proton translocation. This protein is part of the stalk that links CF(0) to CF(1). It either transmits conformational changes from CF(0) to CF(1) or is implicated in proton conduction. The chain is ATP synthase subunit delta from Actinobacillus pleuropneumoniae serotype 7 (strain AP76).